The chain runs to 389 residues: Tryptophan 2,3-dioxygenase (389 aa).

Substrate contacts are provided by residues 60–64 (FIITH) and arginine 131. Histidine 316 serves as a coordination point for heme. Residue threonine 331 coordinates substrate.

It belongs to the tryptophan 2,3-dioxygenase family. In terms of assembly, homotetramer. Dimer of dimers. The cofactor is heme.

The enzyme catalyses L-tryptophan + O2 = N-formyl-L-kynurenine. It participates in amino-acid degradation; L-tryptophan degradation via kynurenine pathway; L-kynurenine from L-tryptophan: step 1/2. It functions in the pathway pigment biosynthesis; ommochrome biosynthesis. In terms of biological role, heme-dependent dioxygenase that catalyzes the oxidative cleavage of the L-tryptophan (L-Trp) pyrrole ring and converts L-tryptophan to N-formyl-L-kynurenine. Catalyzes the oxidative cleavage of the indole moiety. The polypeptide is Tryptophan 2,3-dioxygenase (Mayetiola destructor (Hessian fly)).